The sequence spans 349 residues: MAFKIASSPHVTRNLHTSTVMQRVILCLLPGLVVQCAFFGWGTLIQVLLAIIVALSCEAAVMKLRNRSIKASLSDNSAMLTAILIGVAIPPLAPWWMIVMGTVFAIVIVKHLYGGLGHNLFNPAMAAYVLLLVSFPVQMTSWIAPSTVALNTPSVIDSLQLIFNVGAHGGMEQFRLGIDGISMATPLDTLKTDLSLGLTTTESMAKSIFDGGTGVGWFWVNLAYLAGGLVLLKLKAIRWHISTGVLAGLFVASSIGFLLSPDTQASPLFHLFSGATMLAAFFIATDPVTAATSPRGRLIFGALIGVLVYIIRTQGGYPDAFAFAVLLANLCAPFIDYYVRPRTYGHSAP.

The next 3 membrane-spanning stretches (helical) occupy residues 36–56, 77–99, and 124–144; these read CAFF…VALS, SAML…WMIV, and AMAA…SWIA. The residue at position 185 (T185) is an FMN phosphoryl threonine. 5 helical membrane-spanning segments follow: residues 212–232, 239–259, 265–285, 291–311, and 315–335; these read GTGV…LVLL, WHIS…GFLL, ASPL…FIAT, ATSP…VYII, and GGYP…APFI.

The protein belongs to the NqrB/RnfD family. As to quaternary structure, the complex is composed of six subunits: RnfA, RnfB, RnfC, RnfD, RnfE and RnfG. FMN serves as cofactor.

It localises to the cell inner membrane. In terms of biological role, part of a membrane-bound complex that couples electron transfer with translocation of ions across the membrane. The chain is Ion-translocating oxidoreductase complex subunit D from Shewanella sp. (strain ANA-3).